The following is a 162-amino-acid chain: Scytalone dehydratase-like protein claB (162 aa).

Residue Tyr48 participates in substrate binding. Active-site residues include His83 and His108.

Belongs to the scytalone dehydratase family.

It functions in the pathway pigment biosynthesis. Scytalone dehydratase-like protein; part of the gene cluster that mediates the biosynthesis of the bianthraquinone cladofulvin, a conidial pigment not required for virulence but that plays a role in fitness and resistance to environmental stresses including UV light and low-temperature stress. The pathway begins with the synthesis of atrochrysone thioester by the polyketide synthase (PKS) claG. The atrochrysone carboxyl ACP thioesterase claF then breaks the thioester bond and releases the atrochrysone carboxylic acid from claG. This compound is decarboxylated by claH to yield emodin, which is further converted to chrysophanol hydroquinone by the reductase claC and the dehydratase claB. The cytochrome P450 monooxygenase claM then catalyzes the dimerization of nataloe-emodin to cladofulvin. The chain is Scytalone dehydratase-like protein claB from Passalora fulva (Tomato leaf mold).